A 304-amino-acid polypeptide reads, in one-letter code: Nod factor export ATP-binding protein I (304 aa).

Positions 6 to 236 constitute an ABC transporter domain; that stretch reads IDFQQVEKRY…EIGCDVIEIY (231 aa). 38–45 contributes to the ATP binding site; that stretch reads GPNGAGKT.

This sequence belongs to the ABC transporter superfamily. Lipooligosaccharide exporter (TC 3.A.1.102) family. In terms of assembly, the complex is composed of two ATP-binding proteins (NodI) and two transmembrane proteins (NodJ).

The protein localises to the cell inner membrane. Its function is as follows. Part of the ABC transporter complex NodIJ involved in the export of the nodulation factors (Nod factors), the bacterial signal molecules that induce symbiosis and subsequent nodulation induction. Nod factors are LCO (lipo-chitin oligosaccharide), a modified beta-1,4-linked N-acetylglucosamine oligosaccharide. This subunit is responsible for energy coupling to the transport system. The protein is Nod factor export ATP-binding protein I of Burkholderia thailandensis (strain ATCC 700388 / DSM 13276 / CCUG 48851 / CIP 106301 / E264).